Reading from the N-terminus, the 86-residue chain is Small ribosomal subunit protein bS16 (86 aa).

It belongs to the bacterial ribosomal protein bS16 family.

The protein is Small ribosomal subunit protein bS16 of Legionella pneumophila (strain Paris).